Consider the following 244-residue polypeptide: Futalosine hydrolase (244 aa).

The protein belongs to the PNP/UDP phosphorylase family. Futalosine hydrolase subfamily.

The enzyme catalyses futalosine + H2O = dehypoxanthine futalosine + hypoxanthine. It participates in quinol/quinone metabolism; menaquinone biosynthesis. Catalyzes the hydrolysis of futalosine (FL) to dehypoxanthine futalosine (DHFL) and hypoxanthine, a step in the biosynthesis of menaquinone (MK, vitamin K2). Cannot directly use aminodeoxyfutalosine (AFL) as a substrate. This is Futalosine hydrolase from Acidothermus cellulolyticus (strain ATCC 43068 / DSM 8971 / 11B).